Reading from the N-terminus, the 834-residue chain is MAP kinase phosphatase with leucine-rich repeats protein 1 (834 aa).

Residues 1-103 (MIFKKLFSKG…GSGTTKESKK (103 aa)) are disordered. Low complexity predominate over residues 36–78 (GSGTNTNGLSNSTTNPSSIHSTPTTPTTTASTNLTNSNKLSTL). Over residues 79 to 98 (APITNGNRSLRGSKDGSGTT) the composition is skewed to polar residues. LRR repeat units lie at residues 160–181 (ELRS…IGLL), 183–204 (NLKH…LSQL), 206–226 (SLES…NICK), 229–251 (SLTL…INLE), 252–273 (NLKD…LPNN), 274–292 (IEKL…SKSL), 298–319 (SLTT…LSCL), 321–342 (NVKT…VLGS), 345–366 (SLVT…IVTL), and 368–389 (NLRI…PSSE). Residues 503 to 584 (YEKQENDENN…ENPLKESQGK (82 aa)) form a disordered region. Positions 511–536 (NNSVTLETTTTISIASDNTDEASIQI) are enriched in polar residues. 2 stretches are compositionally biased toward basic and acidic residues: residues 538 to 554 (QKED…DKLL) and 569 to 582 (KQQE…KESQ). Residues 555 to 615 (QESFSENNNN…IRLEKIKYQE (61 aa)) are a coiled coil. The region spanning 695–834 (VPDLIIDKLY…LKKFEKDLSK (140 aa)) is the Tyrosine-protein phosphatase domain. Cys778 (phosphocysteine intermediate) is an active-site residue.

This sequence belongs to the protein-tyrosine phosphatase family. Non-receptor class dual specificity subfamily.

The enzyme catalyses O-phospho-L-tyrosyl-[protein] + H2O = L-tyrosyl-[protein] + phosphate. It carries out the reaction O-phospho-L-seryl-[protein] + H2O = L-seryl-[protein] + phosphate. It catalyses the reaction O-phospho-L-threonyl-[protein] + H2O = L-threonyl-[protein] + phosphate. Probable phosphatase with dual specificity toward Ser/Thr and Tyr-containing proteins. Dephosphorylates pNPP, in vitro. Essential for proper regulation of erkB (erk2) and optimal motility during development. This is MAP kinase phosphatase with leucine-rich repeats protein 1 (mpl1) from Dictyostelium discoideum (Social amoeba).